The following is a 419-amino-acid chain: Protein indeterminate-domain 14 (419 aa).

Residues 1-58 are disordered; it reads MIDYERSNTTKNINTHHHNPPPSSSSSDLLPDGNGTAVTQKRKRRPAGTPDPEAEVVS. 3 C2H2-type zinc fingers span residues 70–92, 112–142, and 148–175; these read YVCE…RRRH, YVCP…RRKH, and WICE…TRGH. Zn(2+) is bound by residues Cys-150, Cys-153, His-166, Cys-170, Cys-177, Cys-179, His-192, and Cys-196. Residues 175–198 form a CCHC-type 2; atypical zinc finger; that stretch reads HSCDCGRVFSRVESFIEHQDTCTV. The interval 185–197 is SHR-binding; sequence RVESFIEHQDTCT. Disordered regions lie at residues 200-259 and 298-318; these read RSQP…PSTL and SEVE…EEAR. 2 stretches are compositionally biased toward low complexity: residues 213–230 and 246–259; these read QHTT…NNEN and RRQS…PSTL. Residues 313-349 are a coiled coil; sequence EREEARRETKRQIEIAELEFAEAKRIRQHARAELHKA.

As to quaternary structure, homo- and heterodimer of IDD14alpha and IDD14beta. Expressed in cotyledons and the vasculature of reosette leaves. Weak expression in hypocotyls and floral organs, but not detected in roots and inflorescence stems.

It is found in the nucleus. Functionally, transcription factor regulating starch metabolism by binding directly to the promoter of QQS. The IDD14beta isoform attenuates the transcription factor activity by competitively forming heterodimers with reduced DNA-binding capacity. Regulates lateral organ morphogenesis and gravitropic responses. Has a redundant role with IDD16 in directing leaf and floral organ morphogenesis. Involved in the establishment of auxin gradients through the regulation of auxin biosynthesis and transport. This is Protein indeterminate-domain 14 from Arabidopsis thaliana (Mouse-ear cress).